We begin with the raw amino-acid sequence, 484 residues long: Probable glycine dehydrogenase (decarboxylating) subunit 2 (484 aa).

Residue K270 is modified to N6-(pyridoxal phosphate)lysine.

This sequence belongs to the GcvP family. C-terminal subunit subfamily. As to quaternary structure, the glycine cleavage system is composed of four proteins: P, T, L and H. In this organism, the P 'protein' is a heterodimer of two subunits. It depends on pyridoxal 5'-phosphate as a cofactor.

The catalysed reaction is N(6)-[(R)-lipoyl]-L-lysyl-[glycine-cleavage complex H protein] + glycine + H(+) = N(6)-[(R)-S(8)-aminomethyldihydrolipoyl]-L-lysyl-[glycine-cleavage complex H protein] + CO2. The glycine cleavage system catalyzes the degradation of glycine. The P protein binds the alpha-amino group of glycine through its pyridoxal phosphate cofactor; CO(2) is released and the remaining methylamine moiety is then transferred to the lipoamide cofactor of the H protein. The polypeptide is Probable glycine dehydrogenase (decarboxylating) subunit 2 (Desulforamulus reducens (strain ATCC BAA-1160 / DSM 100696 / MI-1) (Desulfotomaculum reducens)).